The following is a 2564-amino-acid chain: Highly reducing polyketide synthase 40 (2564 aa).

Positions Pro-8–Arg-432 constitute a Ketosynthase family 3 (KS3) domain. Active-site for beta-ketoacyl synthase activity residues include Cys-181, His-317, and His-358. The interval Glu-435 to Asp-482 is disordered. Low complexity predominate over residues Ser-439 to Asn-455. Basic and acidic residues predominate over residues Gly-473–Asp-482. Positions Tyr-580 to Leu-914 are malonyl-CoA:ACP transacylase (MAT) domain. Residues His-973–Gly-1113 are N-terminal hotdog fold. The interval His-973–Asp-1280 is dehydratase (DH) domain. The PKS/mFAS DH domain maps to His-973–Asn-1283. His-1005 acts as the Proton acceptor; for dehydratase activity in catalysis. The tract at residues Ala-1130 to Asn-1283 is C-terminal hotdog fold. Asp-1199 serves as the catalytic Proton donor; for dehydratase activity. The tract at residues Leu-1451–Leu-1556 is methyltransferase (CMet) domain. An enoyl reductase (ER) domain region spans residues Gly-1854 to Leu-2167. Residues Ala-2191–Ser-2370 are ketoreductase (KR) domain. The region spanning Glu-2472–Ser-2549 is the Carrier domain. Ser-2509 is modified (O-(pantetheine 4'-phosphoryl)serine).

The protein operates within secondary metabolite biosynthesis. Functionally, highly reducing polyketide synthase; part of the gene cluster that mediates the biosynthesis of the lipopeptides W493 A and B. W493 A and B consist of six amino acid residues D-allo-thr, L-Ala, D-Ala, L-Gln, D-Tyr, and L-Val/L-Ile linked to a 3-hydroxy-4-methyltetradecanoic acid polyketide chain. The biosynthesis starts with formation of the linear polyketide chain by the highly reducing polyketide synthase PKS40. The gene cluster contains a putative acyl-CoA ligase (FPSE_09184) for formation of a CoA thioester polyketide. The thiol bond could be hydrolyzed by the putative thioesterase (FPSE_09186) and then accepted by the first T domain in module 1 of NRPS32. The second T domain is responsible for accepting a threonine, which is adenylated by the A domain and epimerized to the D-allo-threonine formed by the E domain. The five successive modules incorporate Ala, Ala, Gln, Tyr, and Val/Ile into the final product, which is released by cyclization. The sequence is that of Highly reducing polyketide synthase 40 from Fusarium pseudograminearum (strain CS3096) (Wheat and barley crown-rot fungus).